The primary structure comprises 345 residues: C5a anaphylatoxin chemotactic receptor 1 (345 aa).

Residues 1–32 lie on the Extracellular side of the membrane; that stretch reads MMVTVSYDYDYNSTFLPDGFVDNYVERLSFGD. Sulfotyrosine occurs at positions 9 and 11. N-linked (GlcNAc...) asparagine glycosylation is present at asparagine 12. A helical membrane pass occupies residues 33-59; that stretch reads LVAVVIMVVVFLVGVPGNALVVWVTAC. The Cytoplasmic portion of the chain corresponds to 60–64; the sequence is EARRH. A helical transmembrane segment spans residues 65-88; that stretch reads INAIWFLNLAAADLLSCLALPILL. Topologically, residues 89–105 are extracellular; that stretch reads VSTVHLNHWYFGDTACK. Cysteine 104 and cysteine 183 form a disulfide bridge. A helical transmembrane segment spans residues 106 to 127; the sequence is VLPSLILLNMYTSILLLATISA. Over 128 to 148 the chain is Cytoplasmic; that stretch reads DRLLLVLSPIWCQRFRGGCLA. A helical transmembrane segment spans residues 149-169; it reads WTACGLAWVLALLLSSPSFLY. Residues 170 to 195 are Extracellular-facing; sequence RRTHNEHFSFKVYCVTDYGRDISKER. A helical transmembrane segment spans residues 196-221; it reads AVALVRLLVGFIVPLITLTACYTFLL. Topologically, residues 222-237 are cytoplasmic; that stretch reads LRTWSRKATRSAKTVK. The chain crosses the membrane as a helical span at residues 238–260; the sequence is VVVAVVSSFFVFWLPYQVTGILL. At 261–277 the chain is on the extracellular side; that stretch reads AWHSPNSATYRNTKALD. A helical membrane pass occupies residues 278–298; it reads AVCVAFAYINCCINPIIYVVA. Over 299–345 the chain is Cytoplasmic; it reads GHGFQGRLLKSLPSVLRNVLTEESLDKRHQSFARSTVDTMPQKSESV. Phosphoserine is present on residues serine 309, serine 312, serine 322, serine 329, and serine 333.

It belongs to the G-protein coupled receptor 1 family. In terms of assembly, homodimer. May also form higher-order oligomers. Interacts (when phosphorylated) with ARRB1 and ARRB2; the interaction is associated with internalization of C5aR. In terms of processing, sulfation plays a critical role in the association of C5aR with C5a, but no significant role in the ability of the receptor to transduce a signal and mobilize calcium in response to a small peptide agonist. Phosphorylated on serine residues in response to C5a binding, resulting in internalization of the receptor and short-term desensitization to C5a. In terms of tissue distribution, expressed strongly in macrophages and spleen. Weak expression detected in lung, liver, brain, heart and kidney.

The protein localises to the cell membrane. It is found in the cytoplasmic vesicle. Functionally, receptor for the chemotactic and inflammatory peptide anaphylatoxin C5a. The ligand interacts with at least two sites on the receptor: a high-affinity site on the extracellular N-terminus, and a second site in the transmembrane region which activates downstream signaling events. Receptor activation stimulates chemotaxis, granule enzyme release, intracellular calcium release and superoxide anion production. This is C5a anaphylatoxin chemotactic receptor 1 (C5AR1) from Cavia porcellus (Guinea pig).